A 416-amino-acid chain; its full sequence is Serine hydroxymethyltransferase (416 aa).

(6S)-5,6,7,8-tetrahydrofolate-binding positions include Leu-118 and 122–124 (GHL). Lys-226 carries the N6-(pyridoxal phosphate)lysine modification. Glu-242 lines the (6S)-5,6,7,8-tetrahydrofolate pocket.

It belongs to the SHMT family. In terms of assembly, homodimer. Requires pyridoxal 5'-phosphate as cofactor.

It is found in the cytoplasm. It carries out the reaction (6R)-5,10-methylene-5,6,7,8-tetrahydrofolate + glycine + H2O = (6S)-5,6,7,8-tetrahydrofolate + L-serine. It functions in the pathway one-carbon metabolism; tetrahydrofolate interconversion. The protein operates within amino-acid biosynthesis; glycine biosynthesis; glycine from L-serine: step 1/1. Its function is as follows. Catalyzes the reversible interconversion of serine and glycine with tetrahydrofolate (THF) serving as the one-carbon carrier. This reaction serves as the major source of one-carbon groups required for the biosynthesis of purines, thymidylate, methionine, and other important biomolecules. Also exhibits THF-independent aldolase activity toward beta-hydroxyamino acids, producing glycine and aldehydes, via a retro-aldol mechanism. The sequence is that of Serine hydroxymethyltransferase from Helicobacter pylori (strain J99 / ATCC 700824) (Campylobacter pylori J99).